A 103-amino-acid chain; its full sequence is UPF0145 protein CYA_2258 (103 aa).

It belongs to the UPF0145 family.

The protein is UPF0145 protein CYA_2258 of Synechococcus sp. (strain JA-3-3Ab) (Cyanobacteria bacterium Yellowstone A-Prime).